A 187-amino-acid polypeptide reads, in one-letter code: Small ribosomal subunit protein uS5 (187 aa).

A disordered region spans residues 1-20; that stretch reads MAERENRRDRRDDRSREETP. Residues 22–85 enclose the S5 DRBM domain; sequence FADRLVAINR…EQAKRQMIRV (64 aa).

The protein belongs to the universal ribosomal protein uS5 family. As to quaternary structure, part of the 30S ribosomal subunit. Contacts proteins S4 and S8.

Its function is as follows. With S4 and S12 plays an important role in translational accuracy. Functionally, located at the back of the 30S subunit body where it stabilizes the conformation of the head with respect to the body. This is Small ribosomal subunit protein uS5 from Cereibacter sphaeroides (strain ATCC 17029 / ATH 2.4.9) (Rhodobacter sphaeroides).